Consider the following 286-residue polypeptide: 4-diphosphocytidyl-2-C-methyl-D-erythritol kinase (286 aa).

Residue K11 is part of the active site. 93–103 contributes to the ATP binding site; it reads PFGAGLGGGSS. The active site involves D135.

This sequence belongs to the GHMP kinase family. IspE subfamily.

The catalysed reaction is 4-CDP-2-C-methyl-D-erythritol + ATP = 4-CDP-2-C-methyl-D-erythritol 2-phosphate + ADP + H(+). It functions in the pathway isoprenoid biosynthesis; isopentenyl diphosphate biosynthesis via DXP pathway; isopentenyl diphosphate from 1-deoxy-D-xylulose 5-phosphate: step 3/6. In terms of biological role, catalyzes the phosphorylation of the position 2 hydroxy group of 4-diphosphocytidyl-2C-methyl-D-erythritol. The chain is 4-diphosphocytidyl-2-C-methyl-D-erythritol kinase from Chlorobaculum tepidum (strain ATCC 49652 / DSM 12025 / NBRC 103806 / TLS) (Chlorobium tepidum).